Here is a 350-residue protein sequence, read N- to C-terminus: Induced myeloid leukemia cell differentiation protein Mcl-1 homolog (350 aa).

Residues lysine 5 and lysine 40 each participate in a glycyl lysine isopeptide (Lys-Gly) (interchain with G-Cter in ubiquitin) cross-link. Residues 104 to 175 (CASPPEEMEG…PAEEEEDELF (72 aa)) form a PEST-like region. At serine 121 the chain carries Phosphoserine. Lysine 136 is covalently cross-linked (Glycyl lysine isopeptide (Lys-Gly) (interchain with G-Cter in ubiquitin)). The segment at 148 to 170 (GEASSGPGTDGSLPSTPPPAEEE) is disordered. Serine 159 carries the post-translational modification Phosphoserine; by GSK3-alpha and GSK3-beta. Residue serine 162 is modified to Phosphoserine. Threonine 163 is subject to Phosphothreonine; by MAPK. Residues lysine 194 and lysine 197 each participate in a glycyl lysine isopeptide (Lys-Gly) (interchain with G-Cter in ubiquitin) cross-link. The short motif at 209–223 (ALETLRRVGDGVQRN) is the BH3 element. A BH1 motif is present at residues 252–272 (HVFSDGVTNWGRIVTLISFGA). A BH2 motif is present at residues 304 to 319 (DWLVKQRGWDGFVEFF). Residues 328–348 (IRNVLLAFAGVAGVGAGLAYL) traverse the membrane as a helical segment.

Belongs to the Bcl-2 family. Interacts with HIF3A (via C-terminus domain). Interacts with BOK, BIK, BAX, BAK1, and TPT1. Interacts with unphosphorylated BAD. Interacts with BMF, BBC3 and PMAIP1. Interacts with BOP. Interacts with BCL2L11; may sequester BCL2L11 to prevent its pro-apoptotic activity. Interacts with GIMAP5 and HSPA8/HSC70; the interaction between HSPA8 and MCL1 is impaired in the absence of GIMAP5. Cleaved by CASP3 during apoptosis, yielding a pro-apoptotic C-terminal fragment. Post-translationally, rapidly degraded in the absence of phosphorylation in the PEST region. In terms of processing, phosphorylated on Ser-159, by GSK3, in response to IL3/interleukin-3 withdrawal. Phosphorylation at Ser-159 induces ubiquitination and proteasomal degradation, abrogating the anti-apoptotic activity. Treatment with taxol or okadaic acid induces phosphorylation on additional sites. Ubiquitinated. Ubiquitination is induced by phosphorylation at Ser-159. Deubiquitinated by USP20; leading to increased stability.

Its subcellular location is the membrane. The protein localises to the cytoplasm. It is found in the mitochondrion. The protein resides in the nucleus. It localises to the nucleoplasm. Involved in the regulation of apoptosis versus cell survival, and in the maintenance of viability but not of proliferation. Mediates its effects by interactions with a number of other regulators of apoptosis. In Felis catus (Cat), this protein is Induced myeloid leukemia cell differentiation protein Mcl-1 homolog (MCL1).